An 89-amino-acid chain; its full sequence is Small ribosomal subunit protein uS15 (89 aa).

This sequence belongs to the universal ribosomal protein uS15 family. Part of the 30S ribosomal subunit. Forms a bridge to the 50S subunit in the 70S ribosome, contacting the 23S rRNA.

In terms of biological role, one of the primary rRNA binding proteins, it binds directly to 16S rRNA where it helps nucleate assembly of the platform of the 30S subunit by binding and bridging several RNA helices of the 16S rRNA. Its function is as follows. Forms an intersubunit bridge (bridge B4) with the 23S rRNA of the 50S subunit in the ribosome. In Shouchella clausii (strain KSM-K16) (Alkalihalobacillus clausii), this protein is Small ribosomal subunit protein uS15.